A 138-amino-acid chain; its full sequence is Large ribosomal subunit protein uL16 (138 aa).

It belongs to the universal ribosomal protein uL16 family. As to quaternary structure, part of the 50S ribosomal subunit.

Its function is as follows. Binds 23S rRNA and is also seen to make contacts with the A and possibly P site tRNAs. This is Large ribosomal subunit protein uL16 from Chlamydia muridarum (strain MoPn / Nigg).